We begin with the raw amino-acid sequence, 127 residues long: Aspartate 1-decarboxylase (127 aa).

Residue Ser25 is the Schiff-base intermediate with substrate; via pyruvic acid of the active site. Pyruvic acid (Ser) is present on Ser25. Thr57 contacts substrate. Tyr58 serves as the catalytic Proton donor. Position 73-75 (73-75) interacts with substrate; it reads GAA.

This sequence belongs to the PanD family. Heterooctamer of four alpha and four beta subunits. It depends on pyruvate as a cofactor. Post-translationally, is synthesized initially as an inactive proenzyme, which is activated by self-cleavage at a specific serine bond to produce a beta-subunit with a hydroxyl group at its C-terminus and an alpha-subunit with a pyruvoyl group at its N-terminus.

It is found in the cytoplasm. The enzyme catalyses L-aspartate + H(+) = beta-alanine + CO2. It functions in the pathway cofactor biosynthesis; (R)-pantothenate biosynthesis; beta-alanine from L-aspartate: step 1/1. Catalyzes the pyruvoyl-dependent decarboxylation of aspartate to produce beta-alanine. This Neisseria gonorrhoeae (strain ATCC 700825 / FA 1090) protein is Aspartate 1-decarboxylase.